A 200-amino-acid chain; its full sequence is ATP synthase subunit s, mitochondrial (200 aa).

A mitochondrion-targeting transit peptide spans 1–25 (MMLFGKVSQQLCGIKKLPWSCDSRY). An N-terminal domain region spans residues 1–61 (MMLFGKVSQQ…SEWLLRCGAM (61 aa)). Mg(2+) is bound at residue G59. LRR repeat units lie at residues 62–87 (VRYHGQERWQTDYNHLPTGPLDKYKI), 88–116 (QAIDATNSCIMSIGFDHMVGLQHVEKIRL), 117–141 (CKCHFIEDDCLLRLGQLENLQKSIL), and 142–173 (EMEIISCGNITDKGIIASRHLRNLKYLLLSDL). T93 lines the Mg(2+) pocket.

This sequence belongs to the ATP synthase subunit s family. In terms of assembly, homotetramer. Associates with ATP synthase.

The protein resides in the mitochondrion. The protein localises to the mitochondrion inner membrane. Its function is as follows. Involved in regulation of mitochondrial membrane ATP synthase. Necessary for H(+) conduction of ATP synthase. Facilitates energy-driven catalysis of ATP synthesis by blocking a proton leak through an alternative proton exit pathway. The sequence is that of ATP synthase subunit s, mitochondrial (DMAC2L) from Macaca fascicularis (Crab-eating macaque).